A 103-amino-acid chain; its full sequence is Large ribosomal subunit protein uL24 (103 aa).

This sequence belongs to the universal ribosomal protein uL24 family. Part of the 50S ribosomal subunit.

In terms of biological role, one of two assembly initiator proteins, it binds directly to the 5'-end of the 23S rRNA, where it nucleates assembly of the 50S subunit. Its function is as follows. One of the proteins that surrounds the polypeptide exit tunnel on the outside of the subunit. This Endomicrobium trichonymphae protein is Large ribosomal subunit protein uL24.